The following is a 539-amino-acid chain: Glycine betaine transporter 2 (539 aa).

The next 12 membrane-spanning stretches (helical) occupy residues 44–64 (LTNP…LLAL), 85–105 (FGAY…ALAF), 129–149 (IVLC…EPIA), 175–195 (FMHW…IVLM), 231–251 (CSII…GLQI), 265–285 (FITQ…SALS), 299–319 (IILS…SFII), 348–368 (WWTV…AIFI), 380–400 (LILS…SIVG), 426–446 (VLLA…LFLI), 480–500 (FWGL…SGGI), and 503–523 (LQSF…PSIL).

Belongs to the BCCT transporter (TC 2.A.15) family.

The protein resides in the cell inner membrane. Functionally, involved in the uptake of the osmoprotectant glycine betaine. This chain is Glycine betaine transporter 2, found in Vibrio parahaemolyticus serotype O3:K6 (strain RIMD 2210633).